The chain runs to 100 residues: Small ribosomal subunit protein uS14c (100 aa).

The protein belongs to the universal ribosomal protein uS14 family. In terms of assembly, part of the 30S ribosomal subunit.

It is found in the plastid. Its subcellular location is the chloroplast. Binds 16S rRNA, required for the assembly of 30S particles. The chain is Small ribosomal subunit protein uS14c from Nymphaea alba (White water-lily).